The following is a 505-amino-acid chain: Flagellin (505 aa).

It belongs to the bacterial flagellin family.

The protein localises to the secreted. It localises to the bacterial flagellum. In terms of biological role, flagellin is the subunit protein which polymerizes to form the filaments of bacterial flagella. This Salmonella derby protein is Flagellin (fliC).